The following is a 186-amino-acid chain: GTP cyclohydrolase 1 (186 aa).

Zn(2+) contacts are provided by cysteine 78, histidine 81, and cysteine 150.

This sequence belongs to the GTP cyclohydrolase I family. As to quaternary structure, toroid-shaped homodecamer, composed of two pentamers of five dimers.

It carries out the reaction GTP + H2O = 7,8-dihydroneopterin 3'-triphosphate + formate + H(+). It participates in cofactor biosynthesis; 7,8-dihydroneopterin triphosphate biosynthesis; 7,8-dihydroneopterin triphosphate from GTP: step 1/1. The sequence is that of GTP cyclohydrolase 1 from Enterococcus faecalis (strain ATCC 700802 / V583).